A 181-amino-acid chain; its full sequence is uncharacterized protein (181 aa).

The N-terminal stretch at 1–19 (MRRLLACSAGVLCFSQLGA) is a signal peptide.

This is an uncharacterized protein from Treponema pallidum (strain Nichols).